A 1062-amino-acid chain; its full sequence is Carbamoyl phosphate synthase large chain (1062 aa).

The tract at residues 1-401 (MPKRKDIHKI…AMQKAVRSLE (401 aa)) is carboxyphosphate synthetic domain. ATP is bound by residues arginine 129, arginine 169, glycine 175, glycine 176, lysine 208, isoleucine 210, glutamate 215, glycine 241, isoleucine 242, histidine 243, glutamine 284, and glutamate 298. Residues 133-327 (KNLCKELGEP…IAKMAAKIAV (195 aa)) form the ATP-grasp 1 domain. Mg(2+) is bound by residues glutamine 284, glutamate 298, and asparagine 300. Positions 284, 298, and 300 each coordinate Mn(2+). Positions 402-546 (IDEKDLYSEE…YSTYDAENES (145 aa)) are oligomerization domain. The tract at residues 547 to 929 (HRSGKKSVIV…ALYKAFAGAK (383 aa)) is carbamoyl phosphate synthetic domain. Residues 671 to 861 (DDIIKELKLN…MAQVATRVIM (191 aa)) form the ATP-grasp 2 domain. ATP is bound by residues arginine 707, aspartate 746, leucine 748, glutamate 752, glycine 777, valine 778, histidine 779, serine 780, glutamine 820, and glutamate 832. Positions 820, 832, and 834 each coordinate Mg(2+). Glutamine 820, glutamate 832, and asparagine 834 together coordinate Mn(2+). The MGS-like domain maps to 930–1062 (MQLPENGNVL…NRSFATDALQ (133 aa)). Residues 930–1062 (MQLPENGNVL…NRSFATDALQ (133 aa)) form an allosteric domain region.

Belongs to the CarB family. As to quaternary structure, composed of two chains; the small (or glutamine) chain promotes the hydrolysis of glutamine to ammonia, which is used by the large (or ammonia) chain to synthesize carbamoyl phosphate. Tetramer of heterodimers (alpha,beta)4. Mg(2+) is required as a cofactor. Mn(2+) serves as cofactor.

The catalysed reaction is hydrogencarbonate + L-glutamine + 2 ATP + H2O = carbamoyl phosphate + L-glutamate + 2 ADP + phosphate + 2 H(+). The enzyme catalyses hydrogencarbonate + NH4(+) + 2 ATP = carbamoyl phosphate + 2 ADP + phosphate + 2 H(+). The protein operates within amino-acid biosynthesis; L-arginine biosynthesis; carbamoyl phosphate from bicarbonate: step 1/1. It participates in pyrimidine metabolism; UMP biosynthesis via de novo pathway; (S)-dihydroorotate from bicarbonate: step 1/3. In terms of biological role, large subunit of the glutamine-dependent carbamoyl phosphate synthetase (CPSase). CPSase catalyzes the formation of carbamoyl phosphate from the ammonia moiety of glutamine, carbonate, and phosphate donated by ATP, constituting the first step of 2 biosynthetic pathways, one leading to arginine and/or urea and the other to pyrimidine nucleotides. The large subunit (synthetase) binds the substrates ammonia (free or transferred from glutamine from the small subunit), hydrogencarbonate and ATP and carries out an ATP-coupled ligase reaction, activating hydrogencarbonate by forming carboxy phosphate which reacts with ammonia to form carbamoyl phosphate. The polypeptide is Carbamoyl phosphate synthase large chain (Lactobacillus acidophilus (strain ATCC 700396 / NCK56 / N2 / NCFM)).